The following is a 45-amino-acid chain: Putative purine permease 9 (45 aa).

Not detected in seedlings, leaves, embryos or root and shoot meristems.

The chain is Putative purine permease 9 from Arabidopsis thaliana (Mouse-ear cress).